Consider the following 555-residue polypeptide: Embryonic protein DC-8 (555 aa).

Over residues 83-115 (RENTDYAYDKGREGGDVAAQKAEEAKEKAKMAK) the composition is skewed to basic and acidic residues. 2 disordered regions span residues 83–118 (RENTDYAYDKGREGGDVAAQKAEEAKEKAKMAKDTT) and 132–151 (KAEEAKEKAAQKAEETKEKA). 17 repeat units span residues 97-114 (GDVAAQKAEEAKEKAKMA), 115-125 (KDTTMGKAGEY), 126-140 (KDYTAQKAEEAKEKA), 141-154 (AQKAEETKEKAGEY), 155-176 (KNYTAQKAGEAKDTTLGKAGEY), 177-191 (KDYAAQKAAEAKDTT), 192-205 (AQKAAEAKEKTGEY), 206-216 (KDYAAQKAAEA), 217-237 (KVLAAQKAAEAKDTTGKDGEY), 238-259 (KDYAAQKAAEAKDATMQKTGEY), 260-281 (KDYAAQKTAETKDATMEKAKEY), 282-303 (KEYAAQKAAEAKDATMQKTGEY), 304-325 (KDYSAQKAAETKDATMEKTKEY), 326-343 (KDYTAQKAAETKDATMEK), 344-358 (AKEAKDTTVQKTGEY), 359-376 (KDYAAEKAKEGKDVTVEK), and 377-391 (AKEGKDTTVGKMTEL). The tract at residues 97–391 (GDVAAQKAEE…DTTVGKMTEL (295 aa)) is 17 X approximate tandem repeats. A disordered region spans residues 184-204 (AAEAKDTTAQKAAEAKEKTGE). The segment covering 444–465 (LQEEGVKDEAKQRAEADRETAG) has biased composition (basic and acidic residues). The disordered stretch occupies residues 444-472 (LQEEGVKDEAKQRAEADRETAGDRGSAAK).

The protein belongs to the LEA type 4 family.

The protein localises to the cytoplasm. The protein resides in the secreted. Its subcellular location is the cell wall. May play a role in late embryogeny. This chain is Embryonic protein DC-8, found in Daucus carota (Wild carrot).